The primary structure comprises 209 residues: Small ribosomal subunit protein uS3 (209 aa).

Residues 17 to 86 (IDEFLEKELR…NPQIEVEEIK (70 aa)) enclose the KH type-2 domain.

It belongs to the universal ribosomal protein uS3 family. Part of the 30S ribosomal subunit.

In terms of biological role, binds the lower part of the 30S subunit head. The chain is Small ribosomal subunit protein uS3 from Thermococcus kodakarensis (strain ATCC BAA-918 / JCM 12380 / KOD1) (Pyrococcus kodakaraensis (strain KOD1)).